Reading from the N-terminus, the 119-residue chain is Putative membrane protein insertion efficiency factor (119 aa).

The protein belongs to the UPF0161 family.

It localises to the cell inner membrane. In terms of biological role, could be involved in insertion of integral membrane proteins into the membrane. The sequence is that of Putative membrane protein insertion efficiency factor from Brucella anthropi (strain ATCC 49188 / DSM 6882 / CCUG 24695 / JCM 21032 / LMG 3331 / NBRC 15819 / NCTC 12168 / Alc 37) (Ochrobactrum anthropi).